We begin with the raw amino-acid sequence, 141 residues long: Large ribosomal subunit protein uL11 (141 aa).

It belongs to the universal ribosomal protein uL11 family. As to quaternary structure, part of the ribosomal stalk of the 50S ribosomal subunit. Interacts with L10 and the large rRNA to form the base of the stalk. L10 forms an elongated spine to which L12 dimers bind in a sequential fashion forming a multimeric L10(L12)X complex. One or more lysine residues are methylated.

Its function is as follows. Forms part of the ribosomal stalk which helps the ribosome interact with GTP-bound translation factors. The chain is Large ribosomal subunit protein uL11 from Chlorobium luteolum (strain DSM 273 / BCRC 81028 / 2530) (Pelodictyon luteolum).